The following is a 345-amino-acid chain: Pectin lyase (345 aa).

Positions 1–24 (MKRFCLWFAVFSLLLVLLPGKAFG) are cleaved as a signal peptide. Arg-234 is a catalytic residue.

It belongs to the polysaccharide lyase 1 family.

It localises to the secreted. The catalysed reaction is Eliminative cleavage of (1-&gt;4)-alpha-D-galacturonan methyl ester to give oligosaccharides with 4-deoxy-6-O-methyl-alpha-D-galact-4-enuronosyl groups at their non-reducing ends.. With respect to regulation, inhibited by Hg(2+) and Mn(2+). Not affected by EDTA in vitro. Functionally, catalyzes the depolymerization of pectins of methyl esterification degree from 13 to 75%, with an endo mode of action. Cannot degrade polygalacturonate. Also displays protopectinase activity, i.e. releases pectin from protopectin. This Bacillus subtilis protein is Pectin lyase (pelB).